Reading from the N-terminus, the 590-residue chain is Aspartate--tRNA(Asp/Asn) ligase (590 aa).

L-aspartate is bound at residue Glu-182. An aspartate region spans residues 206 to 209; that stretch reads QLFK. Arg-228 serves as a coordination point for L-aspartate. Residues 228–230 and Gln-237 contribute to the ATP site; that span reads RDE. His-454 lines the L-aspartate pocket. An ATP-binding site is contributed by Glu-488. Arg-495 contacts L-aspartate. 540-543 is an ATP binding site; sequence GLDR.

The protein belongs to the class-II aminoacyl-tRNA synthetase family. Type 1 subfamily. In terms of assembly, homodimer.

It localises to the cytoplasm. It catalyses the reaction tRNA(Asx) + L-aspartate + ATP = L-aspartyl-tRNA(Asx) + AMP + diphosphate. Functionally, aspartyl-tRNA synthetase with relaxed tRNA specificity since it is able to aspartylate not only its cognate tRNA(Asp) but also tRNA(Asn). Reaction proceeds in two steps: L-aspartate is first activated by ATP to form Asp-AMP and then transferred to the acceptor end of tRNA(Asp/Asn). This chain is Aspartate--tRNA(Asp/Asn) ligase, found in Halothermothrix orenii (strain H 168 / OCM 544 / DSM 9562).